A 656-amino-acid polypeptide reads, in one-letter code: Methionine--tRNA ligase (656 aa).

A 'HIGH' region motif is present at residues 11–21; it reads YYVNDIPHIGH. Residues Cys126, Cys129, Cys147, and Cys150 each contribute to the Zn(2+) site. The 'KMSKS' region signature appears at 301-305; that stretch reads KMSKS. Lys304 is a binding site for ATP. The tRNA-binding domain maps to 555-656; it reads DFKKVEIKVG…REKIAGSLIS (102 aa).

This sequence belongs to the class-I aminoacyl-tRNA synthetase family. MetG type 2A subfamily. In terms of assembly, homodimer. Zn(2+) serves as cofactor.

It is found in the cytoplasm. The catalysed reaction is tRNA(Met) + L-methionine + ATP = L-methionyl-tRNA(Met) + AMP + diphosphate. Functionally, is required not only for elongation of protein synthesis but also for the initiation of all mRNA translation through initiator tRNA(fMet) aminoacylation. This is Methionine--tRNA ligase (metG) from Helicobacter pylori (strain J99 / ATCC 700824) (Campylobacter pylori J99).